We begin with the raw amino-acid sequence, 145 residues long: Cell division protein SepF (145 aa).

Basic and acidic residues predominate over residues 23–41; it reads PQEVSKTKDENAKPKHETP. Positions 23–42 are disordered; it reads PQEVSKTKDENAKPKHETPK.

This sequence belongs to the SepF family. Homodimer. Interacts with FtsZ.

Its subcellular location is the cytoplasm. In terms of biological role, cell division protein that is part of the divisome complex and is recruited early to the Z-ring. Probably stimulates Z-ring formation, perhaps through the cross-linking of FtsZ protofilaments. Its function overlaps with FtsA. In Caldicellulosiruptor bescii (strain ATCC BAA-1888 / DSM 6725 / KCTC 15123 / Z-1320) (Anaerocellum thermophilum), this protein is Cell division protein SepF.